An 89-amino-acid chain; its full sequence is Alpha-ketoglutarate dehydrogenase subunit 4, mitochondrial (89 aa).

This sequence belongs to the alpha-ketoglutarate dehydrogenase component 4 family. As to quaternary structure, component of the 2-oxoglutarate dehydrogenase complex (OGDC), also called alpha-ketoglutarate dehydrogenase (KGDH) complex. The copmplex is composed of the catalytic subunits OGDH (2-oxoglutarate dehydrogenase kgd1; also called E1 subunit), DLST (dihydrolipoamide succinyltransferase kgd2; also called E2 subunit) and DLD (dihydrolipoamide dehydrogenase dld1; also called E3 subunit), and the assembly factor KGD4. Within OGDC, interacts (via N-terminus) with E3 subunit and (via C-terminus) with the complex core formed by E1 and E2 subunits.

It is found in the mitochondrion. Molecular adapter that is necessary to a form a stable 2-oxoglutarate dehydrogenase enzyme complex (OGDC). Required for incorporation of the E3 subunit (dld1) into the E1-E2 core (kgd1-kgd2) of mitochondrial OGDC, and acting as a stability factor for the fully assembled complex. This Schizosaccharomyces pombe (strain 972 / ATCC 24843) (Fission yeast) protein is Alpha-ketoglutarate dehydrogenase subunit 4, mitochondrial (kgd4).